The sequence spans 432 residues: Putative D-alanyl-D-alanine carboxypeptidase (432 aa).

A helical; Signal-anchor membrane pass occupies residues 7–25 (ATVLLTFSLSAFAVEYPVL).

The protein belongs to the peptidase S12 family. YfeW subfamily.

The protein resides in the cell inner membrane. The enzyme catalyses Preferential cleavage: (Ac)2-L-Lys-D-Ala-|-D-Ala. Also transpeptidation of peptidyl-alanyl moieties that are N-acyl substituents of D-alanine.. This Salmonella paratyphi A (strain ATCC 9150 / SARB42) protein is Putative D-alanyl-D-alanine carboxypeptidase.